The chain runs to 677 residues: UPF0652 protein (677 aa).

The B box-type; atypical zinc-finger motif lies at E38–K84. Zn(2+) contacts are provided by C43, C46, C66, and H71. Residues Y91–V111 are compositionally biased toward basic and acidic residues. Disordered regions lie at residues Y91–I142 and L156–D192. The span at N113–N126 shows a compositional bias: low complexity. Residues H163–I178 show a composition bias toward polar residues.

This sequence belongs to the UPF0652 family.

In Dictyostelium discoideum (Social amoeba), this protein is UPF0652 protein.